A 1004-amino-acid chain; its full sequence is Protein CHUP1, chloroplastic (1004 aa).

Positions 1–25 are required for chloroplast localization; that stretch reads MFVRIGFVVAASIAAVTVKRLNVKP. The tract at residues 22–63 is disordered; that stretch reads NVKPSKPSKPSDNGEGGDKEQSVDPDYNLNDKNLQEEEEEEE. The stretch at 123-341 forms a coiled coil; that stretch reads EMAYNDGELE…KQVEGLQMNR (219 aa). The interval 269–290 is leucine-zipper 1; sequence LEVQVMELKRKNRELQHEKREL. 4 disordered regions span residues 398 to 482, 504 to 536, 612 to 718, and 736 to 755; these read GSER…SMNK, FGQV…GEGL, TATG…GNKV, and SKKE…SSAA. At serine 399 the chain carries Phosphoserine. The span at 409–419 shows a compositional bias: polar residues; it reads ESNYSQPSSPG. The span at 427–439 shows a compositional bias: low complexity; sequence SMDSSTSRFSSFS. Polar residues-rich tracts occupy residues 504–517 and 612–624; these read FGQV…TPET and TATG…SNES. Residues 670–706 show a composition bias toward pro residues; sequence ARPPLPGGGPPPPPPPPGGGPPPPPGGGPPPPPPPPG. The span at 744–755 shows a compositional bias: polar residues; sequence LISSGTGNSSAA. Residues 802–823 form a leucine-zipper 2 region; the sequence is LLAFVSWLDEELSFLVDERAVL. The segment at 979-1004 is disordered; sequence RSRAKTESGDNNNNNNNNSNEEESVN.

As to expression, expressed in cauline leaves, rosette leaves, stems and flowers, but not in roots.

Its subcellular location is the plastid. The protein resides in the chloroplast outer membrane. Its function is as follows. Required for the positioning and movement of chloroplasts. Interacts with profilin and actin independent of its polymerization status. Regulates chloroplast localization by anchoring chloroplasts to the plasma membrane and forming a bridge to the actin cytoskeleton. This chain is Protein CHUP1, chloroplastic (CHUP1), found in Arabidopsis thaliana (Mouse-ear cress).